The following is a 497-amino-acid chain: Glycerol kinase (497 aa).

Threonine 13 serves as a coordination point for ADP. Threonine 13, threonine 14, and serine 15 together coordinate ATP. A sn-glycerol 3-phosphate-binding site is contributed by threonine 13. ADP is bound at residue arginine 17. Sn-glycerol 3-phosphate is bound by residues arginine 83, glutamate 84, and tyrosine 135. Arginine 83, glutamate 84, and tyrosine 135 together coordinate glycerol. At histidine 231 the chain carries Phosphohistidine; by HPr. Sn-glycerol 3-phosphate is bound at residue aspartate 245. Glycerol contacts are provided by aspartate 245 and glutamine 246. Positions 267 and 310 each coordinate ADP. Residues threonine 267, glycine 310, glutamine 314, and glycine 411 each coordinate ATP. ADP is bound by residues glycine 411 and asparagine 415.

It belongs to the FGGY kinase family. Homotetramer and homodimer (in equilibrium). The phosphoenolpyruvate-dependent sugar phosphotransferase system (PTS), including enzyme I, and histidine-containing protein (HPr) are required for the phosphorylation, which leads to the activation of the enzyme.

The enzyme catalyses glycerol + ATP = sn-glycerol 3-phosphate + ADP + H(+). Its pathway is polyol metabolism; glycerol degradation via glycerol kinase pathway; sn-glycerol 3-phosphate from glycerol: step 1/1. Activated by phosphorylation and inhibited by fructose 1,6-bisphosphate (FBP). Functionally, key enzyme in the regulation of glycerol uptake and metabolism. Catalyzes the phosphorylation of glycerol to yield sn-glycerol 3-phosphate. This Listeria welshimeri serovar 6b (strain ATCC 35897 / DSM 20650 / CCUG 15529 / CIP 8149 / NCTC 11857 / SLCC 5334 / V8) protein is Glycerol kinase.